The chain runs to 512 residues: Maturase K (512 aa).

The protein belongs to the intron maturase 2 family. MatK subfamily.

The protein localises to the plastid. It localises to the chloroplast. Usually encoded in the trnK tRNA gene intron. Probably assists in splicing its own and other chloroplast group II introns. The chain is Maturase K from Lilium canadense (Canada lily).